Reading from the N-terminus, the 571-residue chain is Sulfite reductase [NADPH] hemoprotein beta-component (571 aa).

Residues Cys435, Cys441, Cys480, and Cys484 each coordinate [4Fe-4S] cluster. Cys484 provides a ligand contact to siroheme.

The protein belongs to the nitrite and sulfite reductase 4Fe-4S domain family. Alpha(8)-beta(8). The alpha component is a flavoprotein, the beta component is a hemoprotein. Requires siroheme as cofactor. [4Fe-4S] cluster is required as a cofactor.

The catalysed reaction is hydrogen sulfide + 3 NADP(+) + 3 H2O = sulfite + 3 NADPH + 4 H(+). It participates in sulfur metabolism; hydrogen sulfide biosynthesis; hydrogen sulfide from sulfite (NADPH route): step 1/1. Functionally, component of the sulfite reductase complex that catalyzes the 6-electron reduction of sulfite to sulfide. This is one of several activities required for the biosynthesis of L-cysteine from sulfate. In Dickeya chrysanthemi (strain Ech1591) (Dickeya zeae (strain Ech1591)), this protein is Sulfite reductase [NADPH] hemoprotein beta-component.